A 1014-amino-acid chain; its full sequence is MADRLIVRGAREHNLKNVSLDLPRDSLIVFTGLSGSGKSSLAFDTIFAEGQRRYVESLSSYARQFLGQMDKPDVDFIEGLSPAVSIDQKSTSRNPRSTVGTITEVYDYLRLLFARIGKPHCPECGRPISRQSPQAIVDKVLELPEGSRFQVLSPLVRERKGEFVDLFADLQTKGYSRARVDGETVQLSNPPTLKKQEKHTIEVVVDRLTVKDSAKRRLTDSVETALGLSGGMVVLDFVDLPEDDPERERMYSEHLYCPYDDLSFEELEPRSFSFNSPFGACPDCSGIGTRMEVDAELIVPDEDKSLDEGAIHPWSHGHTKDYFGRLIGALADALGFRTDIPFAGLPLRARKALLYGHKTQVEVRYRNRYGRERRYTTAFEGAIPFVKRRHSEAESDASRERFEGYMREVPCPTCQGTRLKPLVLAVTVMGKSIAEVSAMSISDCADFLGELTLNARDKKIAERVLKEVNERLRFLVDVGLDYLSLNRAAGTLSGGEAQRIRLATQIGSGLVGVLYVLDEPSIGLHQRDNHRLIETLVRLRDMGNTLIVVEHDEDTIKVADWIVDIGPGAGEHGGKVVHSGSVKELLDNAESQTGLYLSGRKAIPLPDIRRPQDPSRRLTVHGARENNLQDIDVSFPLGVFTAVTGVSGSGKSTLVNDILYTHLARELNGARNVPGRHTRVDGDDLVDKVVHVDQSPIGRTPRSNPATYTGVFDHIRKLFAETTEAKVRGYLPGRFSFNVKGGRCENCAGDGTIKIEMNFLPDVYVPCEVCHGARYNRETLEVHYKGKSIADVLNMPIEEATDFFEAVPAISRHMKTLKDVGLGYVRLGQSATTLSGGEAQRVKLASELQRRSTGRTVYVLDEPTTGLHFEDISKLLTVLGGLVDKGNTVIVIEHNLDVIKTADWVVDMGPEGGAGGGLVVAEGTPEQVAGVPASHTGKFLRDVLGADRVSDAAPVTRPRKAAKTVAAKAAAKKTATKTVTGTAAKKATATRTAKTAVKKAAKPAAKKTTRTSKA.

32 to 39 (GLSGSGKS) provides a ligand contact to ATP. ABC transporter domains are found at residues 314-592 (WSHG…AESQ) and 612-941 (QDPS…KFLR). 645-652 (GVSGSGKS) contacts ATP. A C4-type zinc finger spans residues 744 to 770 (CENCAGDGTIKIEMNFLPDVYVPCEVC). Residues 976–995 (TKTVTGTAAKKATATRTAKT) are compositionally biased toward low complexity. Residues 976 to 1014 (TKTVTGTAAKKATATRTAKTAVKKAAKPAAKKTTRTSKA) are disordered. The segment covering 996–1014 (AVKKAAKPAAKKTTRTSKA) has biased composition (basic residues).

The protein belongs to the ABC transporter superfamily. UvrA family. As to quaternary structure, forms a heterotetramer with UvrB during the search for lesions.

The protein localises to the cytoplasm. The UvrABC repair system catalyzes the recognition and processing of DNA lesions. UvrA is an ATPase and a DNA-binding protein. A damage recognition complex composed of 2 UvrA and 2 UvrB subunits scans DNA for abnormalities. When the presence of a lesion has been verified by UvrB, the UvrA molecules dissociate. The polypeptide is UvrABC system protein A (Streptomyces coelicolor (strain ATCC BAA-471 / A3(2) / M145)).